The chain runs to 162 residues: MDEKDLAAQPEEAGQDPRLPGPHEDPRRQEGAEAQAAEGPLAPHAQGERLKRPPPAPGGKLVSLKGDRAFQRLRKGKAGRGRYVSVKWLPAPELRVGIVVSKKVGKAVVRNKVKRRLREILRRLHLPKAHLLVVASPEAREASYVELFQDVARALKKSGLIQ.

The interval 1–67 (MDEKDLAAQP…GGKLVSLKGD (67 aa)) is disordered. Residues 21–31 (GPHEDPRRQEG) show a composition bias toward basic and acidic residues.

This sequence belongs to the RnpA family. In terms of assembly, consists of a catalytic RNA component (M1 or rnpB) and a protein subunit.

It carries out the reaction Endonucleolytic cleavage of RNA, removing 5'-extranucleotides from tRNA precursor.. RNaseP catalyzes the removal of the 5'-leader sequence from pre-tRNA to produce the mature 5'-terminus. It can also cleave other RNA substrates such as 4.5S RNA. The protein component plays an auxiliary but essential role in vivo by binding to the 5'-leader sequence and broadening the substrate specificity of the ribozyme. This chain is Ribonuclease P protein component, found in Thermus brockianus.